The primary structure comprises 447 residues: Asparagine--tRNA ligase (447 aa).

This sequence belongs to the class-II aminoacyl-tRNA synthetase family. In terms of assembly, homodimer.

Its subcellular location is the cytoplasm. The enzyme catalyses tRNA(Asn) + L-asparagine + ATP = L-asparaginyl-tRNA(Asn) + AMP + diphosphate + H(+). The protein is Asparagine--tRNA ligase of Lactococcus lactis subsp. cremoris (strain MG1363).